Consider the following 226-residue polypeptide: Neuromodulin (226 aa).

Positions 1-226 (MLCCMRRTKQ…EDPEADQEHA (226 aa)) are disordered. S-palmitoyl cysteine attachment occurs at residues Cys-3 and Cys-4. A compositionally biased stretch (basic and acidic residues) spans 9 to 32 (KQVEKNDEDQKIEQDGVKPEDKAH). Residues 31–60 (AHKAATKIQASFRGHITRKKLKDEKKGDAP) form the IQ domain. Position 41 is a phosphoserine; by PHK and PKC (Ser-41). Basic and acidic residues predominate over residues 51–84 (LKDEKKGDAPAAEAEAKEKDDAPVADGVEKKEGD). A compositionally biased stretch (low complexity) spans 85 to 97 (GSATTDAAPATSP). Phosphoserine occurs at positions 86 and 96. Basic and acidic residues predominate over residues 98–127 (KAEEPSKAGDAPSEEKKGEGDAAPSEEKAG). A compositionally biased stretch (low complexity) spans 128 to 139 (SAETESAAKATT). Residues Ser-142, Ser-144, and Ser-145 each carry the phosphoserine modification. The span at 146–158 (KAEDGPAKEEPKQ) shows a compositional bias: basic and acidic residues. Residues 159 to 192 (ADVPAAVTDAAATTPAAEDAAKAAQPPTETAESS) show a composition bias toward low complexity. Position 172 is a phosphothreonine (Thr-172). 2 positions are modified to phosphoserine: Ser-191 and Ser-192. Basic and acidic residues predominate over residues 201-214 (VDEAKPKESARQDE). Over residues 215–226 (GKEDPEADQEHA) the composition is skewed to acidic residues.

Belongs to the neuromodulin family. As to quaternary structure, identified in a complex containing FGFR4, NCAM1, CDH2, PLCG1, FRS2, SRC, SHC1, GAP43 and CTTN. Interacts (via IQ domain) with calmodulin. Binds calmodulin with a greater affinity in the absence of Ca(2+) than in its presence. In terms of processing, phosphorylated. Phosphorylation of this protein by a protein kinase C is specifically correlated with certain forms of synaptic plasticity. Post-translationally, palmitoylated by ZDHHC3. Palmitoylation is regulated by ARF6 and is essential for plasma membrane association and axonal and dendritic filopodia induction. Deacylated by LYPLA2. Expressed in hippocampal neurons, with highest levels of expression in the CA4 and CA3 neurons and lower levels in CA1 neurons. Expressed in the dorsal root ganglion.

Its subcellular location is the cell membrane. The protein resides in the cell projection. It localises to the growth cone. The protein localises to the growth cone membrane. It is found in the synapse. Its subcellular location is the filopodium membrane. The protein resides in the perikaryon. It localises to the dendrite. The protein localises to the axon. It is found in the cytoplasm. Functionally, this protein is associated with nerve growth. It is a major component of the motile 'growth cones' that form the tips of elongating axons. Plays a role in axonal and dendritic filopodia induction. In Rattus norvegicus (Rat), this protein is Neuromodulin (Gap43).